The sequence spans 247 residues: MKFFQEKISIKETNILLKVDNPKFFKIAKNTIINERFNLENYILRNPIFLTSYSPVEVLDNAPKIVKLMAEAGFNADVGPMAAVAGTFSQLIVENLIENDCKNAISENGGDICLKCEMDTTVGLYAGNSSLSGSLGFKLKKEKIKNGYGICTSSGTVGHSVSLGNADSVTVFSKSASIADAAATSIGNFAVGNNVDAINKCLEKAENIPKIDGVFVCMGEHAGKIGKIPQFIKTDKKEGLGNVFEMF.

It belongs to the UPF0280 family.

This is UPF0280 protein MmarC7_0482 from Methanococcus maripaludis (strain C7 / ATCC BAA-1331).